The following is a 485-amino-acid chain: Glutamate--tRNA ligase (485 aa).

A 'HIGH' region motif is present at residues 12-22 (PSPTGEPHVGT). The 'KMSKS' region signature appears at 253-257 (KLSKR). Lys-256 lines the ATP pocket.

The protein belongs to the class-I aminoacyl-tRNA synthetase family. Glutamate--tRNA ligase type 1 subfamily. In terms of assembly, monomer.

The protein localises to the cytoplasm. It catalyses the reaction tRNA(Glu) + L-glutamate + ATP = L-glutamyl-tRNA(Glu) + AMP + diphosphate. Catalyzes the attachment of glutamate to tRNA(Glu) in a two-step reaction: glutamate is first activated by ATP to form Glu-AMP and then transferred to the acceptor end of tRNA(Glu). The sequence is that of Glutamate--tRNA ligase from Sinorhizobium medicae (strain WSM419) (Ensifer medicae).